The following is a 506-amino-acid chain: Ribose import ATP-binding protein RbsA (506 aa).

2 ABC transporter domains span residues 5-237 and 249-492; these read VQLI…VGRP and PFGA…LAIE. 37 to 44 provides a ligand contact to ATP; the sequence is GENGAGKS.

The protein belongs to the ABC transporter superfamily. Ribose importer (TC 3.A.1.2.1) family. In terms of assembly, the complex is composed of an ATP-binding protein (RbsA), two transmembrane proteins (RbsC) and a solute-binding protein (RbsB).

It is found in the cell inner membrane. It catalyses the reaction D-ribose(out) + ATP + H2O = D-ribose(in) + ADP + phosphate + H(+). Its function is as follows. Part of the ABC transporter complex RbsABC involved in ribose import. Responsible for energy coupling to the transport system. This chain is Ribose import ATP-binding protein RbsA, found in Chelativorans sp. (strain BNC1).